The following is a 247-amino-acid chain: Terpene cyclase ausL (247 aa).

The next 6 helical transmembrane spans lie at 49-69 (AIAV…AWIY), 75-95 (HWQG…AATL), 114-134 (LVLL…CLAL), 138-158 (GALG…SGAV), 171-191 (SLVI…KLCI), and 206-226 (PMCW…PVLY).

It belongs to the paxB family.

The protein localises to the membrane. Its pathway is secondary metabolite biosynthesis; terpenoid biosynthesis. In terms of biological role, terpene cyclase; part of the gene cluster that mediates the biosynthesis of calidodehydroaustin, a fungal meroterpenoid. The first step of the pathway is the synthesis of 3,5-dimethylorsellinic acid by the polyketide synthase ausA. 3,5-dimethylorsellinic acid is then prenylated by the polyprenyl transferase ausN. Further epoxidation by the FAD-dependent monooxygenase ausM and cyclization by the probable terpene cyclase ausL lead to the formation of protoaustinoid A. Protoaustinoid A is then oxidized to spiro-lactone preaustinoid A3 by the combined action of the FAD-binding monooxygenases ausB and ausC, and the dioxygenase ausE. Acid-catalyzed keto-rearrangement and ring contraction of the tetraketide portion of preaustinoid A3 by ausJ lead to the formation of preaustinoid A4. The aldo-keto reductase ausK, with the help of ausH, is involved in the next step by transforming preaustinoid A4 into isoaustinone which is in turn hydroxylated by the P450 monooxygenase ausI to form austinolide. The cytochrome P450 monooxygenase ausG modifies austinolide to austinol. Austinol is further acetylated to austin by the O-acetyltransferase ausP, which spontaneously changes to dehydroaustin. The cytochrome P450 monooxygenase ausR then converts dehydroaustin is into 7-dehydrodehydroaustin. The hydroxylation catalyzed by ausR permits the O-acetyltransferase ausQ to add an additional acetyl group to the molecule, leading to the formation of acetoxydehydroaustin. The short chain dehydrogenase ausT catalyzes the reduction of the double bond present between carbon atoms 1 and 2 to convert 7-dehydrodehydroaustin into 1,2-dihydro-7-hydroxydehydroaustin. AusQ catalyzes not only an acetylation reaction but also the addition of the PKS ausV diketide product to 1,2-dihydro-7-hydroxydehydroaustin, forming precalidodehydroaustin. Finally, the iron/alpha-ketoglutarate-dependent dioxygenase converts precalidodehydroaustin into calidodehydroaustin. This chain is Terpene cyclase ausL, found in Aspergillus calidoustus.